We begin with the raw amino-acid sequence, 233 residues long: Nickel import system ATP-binding protein NikE (233 aa).

Residues 2–228 (IELKHVTFGY…DRHPYTKELV (227 aa)) form the ABC transporter domain. 35 to 42 (GESGCGKS) provides a ligand contact to ATP.

The protein belongs to the ABC transporter superfamily. In terms of assembly, the complex is composed of two ATP-binding proteins (NikD and NikE), two transmembrane proteins (NikB and NikC) and a solute-binding protein (NikA).

Its subcellular location is the cell membrane. The catalysed reaction is Ni(2+)(out) + ATP + H2O = Ni(2+)(in) + ADP + phosphate + H(+). Functionally, part of the ABC transporter complex NikABCDE (Opp2) involved in nickel import. Probably responsible for energy coupling to the transport system. The protein is Nickel import system ATP-binding protein NikE of Staphylococcus aureus (strain MSSA476).